Reading from the N-terminus, the 315-residue chain is uncharacterized protein (315 aa).

Residues 1–23 show a composition bias toward polar residues; that stretch reads MSNTDALNTANTQITENVDTSSM. Residues 1–31 are disordered; sequence MSNTDALNTANTQITENVDTSSMKVEKTHDS.

This is an uncharacterized protein from Acanthamoeba polyphaga mimivirus (APMV).